Consider the following 188-residue polypeptide: Crossover junction endodeoxyribonuclease RuvC (188 aa).

Residues Asp-14, Glu-74, and Asp-149 contribute to the active site. Residues Asp-14, Glu-74, and Asp-149 each coordinate Mg(2+).

This sequence belongs to the RuvC family. In terms of assembly, homodimer which binds Holliday junction (HJ) DNA. The HJ becomes 2-fold symmetrical on binding to RuvC with unstacked arms; it has a different conformation from HJ DNA in complex with RuvA. In the full resolvosome a probable DNA-RuvA(4)-RuvB(12)-RuvC(2) complex forms which resolves the HJ. It depends on Mg(2+) as a cofactor.

It is found in the cytoplasm. The catalysed reaction is Endonucleolytic cleavage at a junction such as a reciprocal single-stranded crossover between two homologous DNA duplexes (Holliday junction).. Its function is as follows. The RuvA-RuvB-RuvC complex processes Holliday junction (HJ) DNA during genetic recombination and DNA repair. Endonuclease that resolves HJ intermediates. Cleaves cruciform DNA by making single-stranded nicks across the HJ at symmetrical positions within the homologous arms, yielding a 5'-phosphate and a 3'-hydroxyl group; requires a central core of homology in the junction. The consensus cleavage sequence is 5'-(A/T)TT(C/G)-3'. Cleavage occurs on the 3'-side of the TT dinucleotide at the point of strand exchange. HJ branch migration catalyzed by RuvA-RuvB allows RuvC to scan DNA until it finds its consensus sequence, where it cleaves and resolves the cruciform DNA. The chain is Crossover junction endodeoxyribonuclease RuvC from Bacteroides fragilis (strain ATCC 25285 / DSM 2151 / CCUG 4856 / JCM 11019 / LMG 10263 / NCTC 9343 / Onslow / VPI 2553 / EN-2).